An 82-amino-acid chain; its full sequence is Large ribosomal subunit protein uL23 (82 aa).

This sequence belongs to the universal ribosomal protein uL23 family. Part of the 50S ribosomal subunit. Contacts protein L29.

In terms of biological role, binds to 23S rRNA. One of the proteins that surrounds the polypeptide exit tunnel on the outside of the ribosome. In Methanosarcina barkeri (strain Fusaro / DSM 804), this protein is Large ribosomal subunit protein uL23.